A 308-amino-acid chain; its full sequence is Type II restriction enzyme MamI (308 aa).

The enzyme catalyses Endonucleolytic cleavage of DNA to give specific double-stranded fragments with terminal 5'-phosphates.. A P subtype restriction enzyme that recognizes the double-stranded sequence 5'-GATNNNNATC-3' and cleaves after N-5. This Microbacterium ammoniaphilum protein is Type II restriction enzyme MamI.